Reading from the N-terminus, the 122-residue chain is Cytochrome b-c1 complex subunit 7-2, mitochondrial (122 aa).

Belongs to the UQCRB/QCR7 family. Component of the ubiquinol-cytochrome c oxidoreductase (cytochrome b-c1 complex, complex III, CIII), a multisubunit enzyme composed of 10 subunits. The complex is composed of 3 respiratory subunits cytochrome b (MT-CYB), cytochrome c1 (CYC1-1 or CYC1-2) and Rieske protein (UCR1-1 or UCR1-2), 2 core protein subunits MPPalpha1 (or MPPalpha2) and MPPB, and 5 low-molecular weight protein subunits QCR7-1 (or QCR7-2), UCRQ-1 (or UCRQ-2), QCR9, UCRY and probably QCR6-1 (or QCR6-2). The complex exists as an obligatory dimer and forms supercomplexes (SCs) in the inner mitochondrial membrane with NADH-ubiquinone oxidoreductase (complex I, CI), resulting in different assemblies (supercomplexes SCI(1)III(2) and SCI(2)III(4)).

The protein resides in the mitochondrion inner membrane. Component of the ubiquinol-cytochrome c oxidoreductase, a multisubunit transmembrane complex that is part of the mitochondrial electron transport chain which drives oxidative phosphorylation. The respiratory chain contains 3 multisubunit complexes succinate dehydrogenase (complex II, CII), ubiquinol-cytochrome c oxidoreductase (cytochrome b-c1 complex, complex III, CIII) and cytochrome c oxidase (complex IV, CIV), that cooperate to transfer electrons derived from NADH and succinate to molecular oxygen, creating an electrochemical gradient over the inner membrane that drives transmembrane transport and the ATP synthase. The cytochrome b-c1 complex catalyzes electron transfer from ubiquinol to cytochrome c, linking this redox reaction to translocation of protons across the mitochondrial inner membrane, with protons being carried across the membrane as hydrogens on the quinol. In the process called Q cycle, 2 protons are consumed from the matrix, 4 protons are released into the intermembrane space and 2 electrons are passed to cytochrome c. The sequence is that of Cytochrome b-c1 complex subunit 7-2, mitochondrial (QCR7-2) from Arabidopsis thaliana (Mouse-ear cress).